Here is a 276-residue protein sequence, read N- to C-terminus: Protein SCO1 homolog 2, mitochondrial (276 aa).

Residues 1-14 (MLPCRRLVLSCKNQ) constitute a mitochondrion transit peptide. A helical transmembrane segment spans residues 66–82 (YAVPAILLGFAGFVGFL). The region spanning 110–273 (VKGPIIGGPF…SQELLKEVAS (164 aa)) is the Thioredoxin domain.

Belongs to the SCO1/2 family. In terms of tissue distribution, expressed in the whole plant with highest expression in imbibed seeds and embryos, and the root hair zone.

The protein resides in the mitochondrion inner membrane. Its function is as follows. Thought to play a role in cellular copper homeostasis, mitochondrial redox signaling or insertion of copper into the active site of COX. Participates in copper and redox homeostasis. This chain is Protein SCO1 homolog 2, mitochondrial (HCC2), found in Arabidopsis thaliana (Mouse-ear cress).